The sequence spans 525 residues: Transmembrane protein 184C (525 aa).

The next 7 helical transmembrane spans lie at 17–37, 48–68, 83–103, 121–141, 212–232, 254–274, and 287–307; these read LLVL…IWKF, SWFI…WGIL, IIRI…ALVY, VIYN…PNLI, YLVI…LLFY, VVFV…LGVI, and AVAT…AAIA. Disordered stretches follow at residues 358–394 and 483–525; these read PKKK…PSPG and LFPS…STDP. Residues 373 to 388 show a composition bias toward low complexity; sequence SSLLSSSSQDLTSGSS. The span at 483-502 shows a compositional bias: polar residues; the sequence is LFPSTETSENSMIDTSESQQ. Low complexity predominate over residues 503–525; the sequence is ESSDLCTESSDSSTESSDLSTDP.

Belongs to the TMEM184 family.

The protein localises to the membrane. In terms of biological role, possible tumor suppressor which may play a role in cell growth. In Mus musculus (Mouse), this protein is Transmembrane protein 184C (Tmem184c).